The following is a 128-amino-acid chain: Kinetoplast-associated protein 4 (128 aa).

A propeptide spanning residues 1–10 is cleaved from the precursor; sequence MLRFVPRRLA. Residues 60–87 form a disordered region; the sequence is AHPGFKRKEKEPKELKAAKAAKTSTPRA. Residues 65–76 show a composition bias toward basic and acidic residues; the sequence is KRKEKEPKELKA.

It belongs to the KAP family. Associates with the kinetoplast DNA network.

Its subcellular location is the mitochondrion matrix. It localises to the kinetoplast. In terms of biological role, histone H1-like DNA-binding protein involved in the organization and segregation of kinetoplast DNA (kDNA). The mitochondrial DNA of kinetoplastid protozoa consists of about 5,000 minicircles and 20 to 30 maxicircles. These circular DNAs are held together by catenation into a highly organized compact disk structure referred to as a kinetoplast DNA (kDNA) network. Binds preferentially to a specific fragment of minicircle DNA and is able to compact kDNA networks through DNA charge neutralization and condensation. The chain is Kinetoplast-associated protein 4 (KAP4) from Crithidia fasciculata.